Reading from the N-terminus, the 129-residue chain is MINFRGRFGRPLWHYLVLPVVLLLLAVILLTPMIVQTESTLKIRPNQQGLSLPDGFYLYQHLNGRGIHIKSIIPENDSLVVSLEFPEQQMQAIEVLQDVLPAGYAIVASESKKRHRLLPVFRSNQQNLG.

Residues Met-1–His-14 lie on the Cytoplasmic side of the membrane. A helical membrane pass occupies residues Tyr-15 to Val-35. The Periplasmic segment spans residues Gln-36 to Gly-129.

Belongs to the MzrA family. In terms of assembly, interacts with EnvZ.

The protein localises to the cell inner membrane. Modulates the activity of the EnvZ/OmpR two-component regulatory system, probably by directly modulating EnvZ enzymatic activity and increasing stability of phosphorylated OmpR. In Yersinia pestis (strain Pestoides F), this protein is Modulator protein MzrA.